Consider the following 359-residue polypeptide: Dual-specificity RNA methyltransferase RlmN (359 aa).

Glu102 serves as the catalytic Proton acceptor. The Radical SAM core domain occupies 108 to 351; the sequence is EKKRATLCIS…IRKNRGSDIQ (244 aa). Residues Cys115 and Cys354 are joined by a disulfide bond. Residues Cys122, Cys126, and Cys129 each coordinate [4Fe-4S] cluster. Residues 178 to 179, Ser210, 232 to 234, and Asn311 contribute to the S-adenosyl-L-methionine site; these read GE and SLH. Cys354 acts as the S-methylcysteine intermediate in catalysis.

Belongs to the radical SAM superfamily. RlmN family. Requires [4Fe-4S] cluster as cofactor.

It localises to the cytoplasm. It carries out the reaction adenosine(2503) in 23S rRNA + 2 reduced [2Fe-2S]-[ferredoxin] + 2 S-adenosyl-L-methionine = 2-methyladenosine(2503) in 23S rRNA + 5'-deoxyadenosine + L-methionine + 2 oxidized [2Fe-2S]-[ferredoxin] + S-adenosyl-L-homocysteine. The catalysed reaction is adenosine(37) in tRNA + 2 reduced [2Fe-2S]-[ferredoxin] + 2 S-adenosyl-L-methionine = 2-methyladenosine(37) in tRNA + 5'-deoxyadenosine + L-methionine + 2 oxidized [2Fe-2S]-[ferredoxin] + S-adenosyl-L-homocysteine. In terms of biological role, specifically methylates position 2 of adenine 2503 in 23S rRNA and position 2 of adenine 37 in tRNAs. m2A2503 modification seems to play a crucial role in the proofreading step occurring at the peptidyl transferase center and thus would serve to optimize ribosomal fidelity. This is Dual-specificity RNA methyltransferase RlmN from Buchnera aphidicola subsp. Cinara cedri (strain Cc).